A 396-amino-acid chain; its full sequence is NADH-quinone oxidoreductase subunit D (396 aa).

The protein belongs to the complex I 49 kDa subunit family. As to quaternary structure, NDH-1 is composed of 14 different subunits. Subunits NuoB, C, D, E, F, and G constitute the peripheral sector of the complex.

Its subcellular location is the cell inner membrane. The enzyme catalyses a quinone + NADH + 5 H(+)(in) = a quinol + NAD(+) + 4 H(+)(out). Functionally, NDH-1 shuttles electrons from NADH, via FMN and iron-sulfur (Fe-S) centers, to quinones in the respiratory chain. The immediate electron acceptor for the enzyme in this species is believed to be ubiquinone. Couples the redox reaction to proton translocation (for every two electrons transferred, four hydrogen ions are translocated across the cytoplasmic membrane), and thus conserves the redox energy in a proton gradient. The polypeptide is NADH-quinone oxidoreductase subunit D (Methylobacterium sp. (strain 4-46)).